The chain runs to 503 residues: Major facilitator superfamily domain-containing protein 4A (503 aa).

12 consecutive transmembrane segments (helical) span residues 19 to 39 (LTYW…GPTL), 53 to 73 (ITWV…LGGV), 82 to 102 (LFLL…IPFC), 105 to 125 (VGVL…IDTI), 139 to 159 (AIFL…SPLI), 214 to 234 (YAFW…FYLI), 289 to 309 (IWNA…TLFM), 338 to 358 (GYLP…SIPV), 366 to 386 (SMLF…LLSQ), 392 to 412 (MFVG…SMLA), 427 to 447 (VLVT…GSVM), and 455 to 475 (FLVC…VLLV). Positions 484–503 (SEDSACKPPGLDGEATSYQS) are disordered.

The protein belongs to the major facilitator superfamily.

The protein localises to the membrane. In Xenopus tropicalis (Western clawed frog), this protein is Major facilitator superfamily domain-containing protein 4A (mfsd4a).